Here is a 594-residue protein sequence, read N- to C-terminus: Arginine--tRNA ligase (594 aa).

A 'HIGH' region motif is present at residues 139-149; it reads ANPTGPLHVGH.

The protein belongs to the class-I aminoacyl-tRNA synthetase family. In terms of assembly, monomer.

The protein resides in the cytoplasm. The catalysed reaction is tRNA(Arg) + L-arginine + ATP = L-arginyl-tRNA(Arg) + AMP + diphosphate. In Burkholderia pseudomallei (strain 1106a), this protein is Arginine--tRNA ligase.